Consider the following 26-residue polypeptide: Stage V sporulation protein M (26 aa).

The segment at 3-9 is important for localization; it reads FYTIKLP.

In terms of assembly, interacts with SpoIVA. May interact with the ATP-dependent protease FtsH.

Its subcellular location is the forespore outer membrane. Its function is as follows. Coordinates cortex and coat assembly during sporulation. Associates with the spore coat protein SpoIVA and with the outer forespore membrane, thereby serving as a membrane anchor that tethers SpoIVA and the entire spore coat to the forespore surface. May also serve as a competitive inhibitor of FtsH activity during sporulation. The sequence is that of Stage V sporulation protein M from Bacillus subtilis (strain 168).